The sequence spans 625 residues: tRNA uridine 5-carboxymethylaminomethyl modification enzyme MnmG (625 aa).

Position 14–19 (Gly-14–Gly-19) interacts with FAD. Residue Gly-273–Phe-287 participates in NAD(+) binding.

Belongs to the MnmG family. As to quaternary structure, homodimer. Heterotetramer of two MnmE and two MnmG subunits. FAD is required as a cofactor.

It localises to the cytoplasm. NAD-binding protein involved in the addition of a carboxymethylaminomethyl (cmnm) group at the wobble position (U34) of certain tRNAs, forming tRNA-cmnm(5)s(2)U34. This is tRNA uridine 5-carboxymethylaminomethyl modification enzyme MnmG from Clostridium botulinum (strain Loch Maree / Type A3).